Reading from the N-terminus, the 270-residue chain is Carboxy-terminal domain RNA polymerase II polypeptide A small phosphatase 2 (270 aa).

Serine 5 is modified (phosphoserine). Residues 96–254 (QDQGRICVVI…LNLIPVFEEL (159 aa)) enclose the FCP1 homology domain. Aspartate 106 (4-aspartylphosphate intermediate) is an active-site residue. Positions 106, 108, and 217 each coordinate Mg(2+). Aspartate 108 (proton donor) is an active-site residue.

As to quaternary structure, monomer. Interacts with REST. Mg(2+) serves as cofactor. Expression is restricted to non-neuronal tissues.

It localises to the nucleus. It carries out the reaction O-phospho-L-seryl-[protein] + H2O = L-seryl-[protein] + phosphate. The catalysed reaction is O-phospho-L-threonyl-[protein] + H2O = L-threonyl-[protein] + phosphate. In terms of biological role, preferentially catalyzes the dephosphorylation of 'Ser-5' within the tandem 7 residue repeats in the C-terminal domain (CTD) of the largest RNA polymerase II subunit POLR2A. Negatively regulates RNA polymerase II transcription, possibly by controlling the transition from initiation/capping to processive transcript elongation. Recruited by REST to neuronal genes that contain RE-1 elements, leading to neuronal gene silencing in non-neuronal cells. This Mus musculus (Mouse) protein is Carboxy-terminal domain RNA polymerase II polypeptide A small phosphatase 2 (Ctdsp2).